The primary structure comprises 617 residues: Membrane protein insertase YidC (617 aa).

The helical transmembrane segment at methionine 8 to glycine 28 threads the bilayer. Over residues glutamine 36–proline 49 the composition is skewed to polar residues. Residues glutamine 36–serine 91 are disordered. The segment covering proline 61–proline 81 has biased composition (low complexity). 4 helical membrane-spanning segments follow: residues leucine 387–leucine 407, tryptophan 461–isoleucine 481, phenylalanine 517–valine 533, and isoleucine 549–valine 569.

This sequence belongs to the OXA1/ALB3/YidC family. Type 1 subfamily. Interacts with the Sec translocase complex via SecD. Specifically interacts with transmembrane segments of nascent integral membrane proteins during membrane integration.

It localises to the cell inner membrane. In terms of biological role, required for the insertion and/or proper folding and/or complex formation of integral membrane proteins into the membrane. Involved in integration of membrane proteins that insert both dependently and independently of the Sec translocase complex, as well as at least some lipoproteins. Aids folding of multispanning membrane proteins. This is Membrane protein insertase YidC from Methylobacterium radiotolerans (strain ATCC 27329 / DSM 1819 / JCM 2831 / NBRC 15690 / NCIMB 10815 / 0-1).